A 347-amino-acid chain; its full sequence is S-adenosylmethionine:tRNA ribosyltransferase-isomerase (347 aa).

Belongs to the QueA family. As to quaternary structure, monomer.

It localises to the cytoplasm. The enzyme catalyses 7-aminomethyl-7-carbaguanosine(34) in tRNA + S-adenosyl-L-methionine = epoxyqueuosine(34) in tRNA + adenine + L-methionine + 2 H(+). It participates in tRNA modification; tRNA-queuosine biosynthesis. Transfers and isomerizes the ribose moiety from AdoMet to the 7-aminomethyl group of 7-deazaguanine (preQ1-tRNA) to give epoxyqueuosine (oQ-tRNA). This is S-adenosylmethionine:tRNA ribosyltransferase-isomerase from Halalkalibacterium halodurans (strain ATCC BAA-125 / DSM 18197 / FERM 7344 / JCM 9153 / C-125) (Bacillus halodurans).